A 442-amino-acid chain; its full sequence is SPRY domain-containing protein 3 (442 aa).

A B30.2/SPRY domain is found at 17–204 (DLNLHYRFLN…VRLHLNAELG (188 aa)). Positions 371 to 394 (EGEEEEEEEEEEEDGEEIEPEHEG) are disordered. The segment covering 372–390 (GEEEEEEEEEEEDGEEIEP) has biased composition (acidic residues).

In Pongo abelii (Sumatran orangutan), this protein is SPRY domain-containing protein 3 (SPRYD3).